A 504-amino-acid chain; its full sequence is Histidine ammonia-lyase (504 aa).

The segment at residues 142–144 (ASG) is a cross-link (5-imidazolinone (Ala-Gly)). A 2,3-didehydroalanine (Ser) modification is found at serine 143.

This sequence belongs to the PAL/histidase family. Contains an active site 4-methylidene-imidazol-5-one (MIO), which is formed autocatalytically by cyclization and dehydration of residues Ala-Ser-Gly.

The protein resides in the cytoplasm. The enzyme catalyses L-histidine = trans-urocanate + NH4(+). Its pathway is amino-acid degradation; L-histidine degradation into L-glutamate; N-formimidoyl-L-glutamate from L-histidine: step 1/3. This Staphylococcus aureus (strain USA300) protein is Histidine ammonia-lyase.